A 511-amino-acid polypeptide reads, in one-letter code: Inositol-3-phosphate synthase (511 aa).

G70, N71, N72, D143, S179, I180, Q190, R193, S230, A231, N232, T233, G281, S282, D306, T309, N340, N341, D342, K355, G393, D394, D422, and S423 together coordinate NAD(+).

The protein belongs to the myo-inositol 1-phosphate synthase family. It depends on NAD(+) as a cofactor.

It localises to the cytoplasm. It carries out the reaction D-glucose 6-phosphate = 1D-myo-inositol 3-phosphate. The protein operates within polyol metabolism; myo-inositol biosynthesis; myo-inositol from D-glucose 6-phosphate: step 1/2. Its function is as follows. Key enzyme in myo-inositol biosynthesis pathway that catalyzes the conversion of glucose 6-phosphate to 1-myo-inositol 1-phosphate in a NAD-dependent manner. Rate-limiting enzyme in the synthesis of all inositol-containing compounds. This chain is Inositol-3-phosphate synthase (ino1), found in Dictyostelium discoideum (Social amoeba).